The chain runs to 464 residues: UPF0210 protein MA_1691 (464 aa).

It belongs to the UPF0210 family.

The sequence is that of UPF0210 protein MA_1691 from Methanosarcina acetivorans (strain ATCC 35395 / DSM 2834 / JCM 12185 / C2A).